The following is a 983-amino-acid chain: Ephrin type-A receptor 3 (983 aa).

The N-terminal stretch at 1–19 is a signal peptide; it reads MDRRRLPLLLLCAALGSAG. Residues 20–540 lie on the Extracellular side of the membrane; that stretch reads RLSARPGNEV…SFSISSENSQ (521 aa). Positions 28-206 constitute an Eph LBD domain; that stretch reads EVNLLDSKTI…YFKKCPFTVK (179 aa). N231, N336, N390, N403, and N492 each carry an N-linked (GlcNAc...) asparagine glycan. 2 Fibronectin type-III domains span residues 324 to 434 and 435 to 530; these read PPSA…TNQA and APSP…TSPD. A helical membrane pass occupies residues 541-564; sequence VVMIAISAAVAIILLTVVVYVLIG. Residues 565-983 lie on the Cytoplasmic side of the membrane; the sequence is RFCGYKKSKH…THTKNSPVPV (419 aa). Phosphotyrosine; by autocatalysis is present on residues Y596 and Y602. One can recognise a Protein kinase domain in the interval 621-882; that stretch reads ISIDKVVGAG…QIVSILDKLI (262 aa). Residues 628–633, K653, and 700–706 each bind ATP; these read GAGEFG and EYMENGS. Y701 carries the phosphotyrosine; by autocatalysis modification. D746 (proton acceptor) is an active-site residue. 750–751 provides a ligand contact to ATP; the sequence is RN. Phosphotyrosine; by autocatalysis is present on Y779. In terms of domain architecture, SAM spans 911–975; that stretch reads SAFRTAGDWL…VSSIKTLETH (65 aa). Positions 981-983 match the PDZ-binding motif; the sequence is VPV.

It belongs to the protein kinase superfamily. Tyr protein kinase family. Ephrin receptor subfamily. In terms of assembly, heterotetramer upon binding of the ligand. The heterotetramer is composed of an ephrin dimer and a receptor dimer. Oligomerization is probably required to induce biological responses. In terms of processing, autophosphorylates upon activation by EFNA5. In terms of tissue distribution, highly expressed in the developing brain and embryonic tissues. In adult, the greatest levels of expression occur in the brain. It is expressed in a graded manner across the retina with the highest expression at its temporal pole. Detectable in all other adult tissues examined, except the liver.

The protein localises to the cell membrane. The catalysed reaction is L-tyrosyl-[protein] + ATP = O-phospho-L-tyrosyl-[protein] + ADP + H(+). Its function is as follows. Receptor tyrosine kinase which binds promiscuously membrane-bound ephrin family ligands residing on adjacent cells, leading to contact-dependent bidirectional signaling into neighboring cells. The signaling pathway downstream of the receptor is referred to as forward signaling while the signaling pathway downstream of the ephrin ligand is referred to as reverse signaling. Highly promiscuous for ephrin-A ligands it binds preferentially EFNA5. Upon activation by EFNA5 regulates cell-cell adhesion, cytoskeletal organization and cell migration. Plays a role in cardiac cells migration and differentiation probably through activation by EFNA1. Involved in the retinotectal mapping of neurons. May also control the segregation but not the guidance of motor and sensory axons during neuromuscular circuit development. In Gallus gallus (Chicken), this protein is Ephrin type-A receptor 3 (EPHA3).